Consider the following 110-residue polypeptide: UPF0060 membrane protein Pnap_4944 (110 aa).

The next 4 helical transmembrane spans lie at 8–28, 33–53, 65–85, and 88–108; these read ILFAVTALAEIVGCYLPWLVL, SLLLLVPAAMSLGLFAWLLTL, YGGMYIAVALGWLRFVDGIAL, and WDLSGAAIALVGMAVIVMQPS.

Belongs to the UPF0060 family.

Its subcellular location is the cell inner membrane. This is UPF0060 membrane protein Pnap_4944 from Polaromonas naphthalenivorans (strain CJ2).